The following is a 151-amino-acid chain: Actin-depolymerizing factor 10 (151 aa).

In terms of domain architecture, ADF-H spans 15-149 (PAWIEVPEKS…DLEVLRGRAN (135 aa)).

The protein belongs to the actin-binding proteins ADF family.

Its function is as follows. Actin-depolymerizing protein. Severs actin filaments (F-actin) and binds to actin monomers. The sequence is that of Actin-depolymerizing factor 10 (ADF10) from Oryza sativa subsp. japonica (Rice).